Here is a 339-residue protein sequence, read N- to C-terminus: Large ribosomal subunit protein uL29 (339 aa).

The segment at 1–96 (MNDLTKKSVE…FAKQRKAKIE (96 aa)) is large ribosomal subunit protein uL29. The tract at residues 97 to 339 (QMMAEQQAAE…KTTKKGTGKK (243 aa)) is unknown. 2 disordered regions span residues 129–254 (VVST…VPTK) and 311–339 (KENR…TGKK). Over residues 145–156 (APVAAKKPAAAK) the composition is skewed to low complexity. A compositionally biased stretch (basic and acidic residues) spans 157–170 (DFPKQKDVVEEKTA). Residues 171 to 182 (TGKPAAPSAKKA) show a composition bias toward low complexity. The span at 185–210 (AKKDVAQETKTDKDAALKALIKEKAA) shows a compositional bias: basic and acidic residues. Residues 217-238 (KSKTSTPSGKTTVTVKSVTSAK) are compositionally biased toward low complexity. A compositionally biased stretch (basic and acidic residues) spans 239 to 248 (ADIEVPKETS).

It belongs to the universal ribosomal protein uL29 family. As to quaternary structure, forms homomultimers. Part of the ribosome; radioactive IRS binds to purified ribosomes.

Specifically binds a DNA inverted repeat sequence (IRS) found downstream of rpsB in one of the ribosomal subunit operons (for genes rpsB, tsf, and unknown gene x). Might be involved in regulation of transcription of the rpsB operon; the IRS may be a control element to attenuate transcription. The sequence is that of Large ribosomal subunit protein uL29 from Spiroplasma citri.